Consider the following 347-residue polypeptide: Phosphate acyltransferase (347 aa).

Belongs to the PlsX family. Homodimer. Probably interacts with PlsY.

It localises to the cytoplasm. The enzyme catalyses a fatty acyl-[ACP] + phosphate = an acyl phosphate + holo-[ACP]. It participates in lipid metabolism; phospholipid metabolism. Catalyzes the reversible formation of acyl-phosphate (acyl-PO(4)) from acyl-[acyl-carrier-protein] (acyl-ACP). This enzyme utilizes acyl-ACP as fatty acyl donor, but not acyl-CoA. This chain is Phosphate acyltransferase, found in Dehalococcoides mccartyi (strain ATCC BAA-2100 / JCM 16839 / KCTC 5957 / BAV1).